A 258-amino-acid chain; its full sequence is MENTAQAVKSKIEVKNLNFYYGKFHAIRNVNMSIRENKVTAFIGPSGCGKSTLLRTFNRMFELYPGQRAEGEILLDGENLLTSKTDISLIRAKVGMVFQKPTPFPMSIYDNIAFGVRLFERLSKGEMDERVEWALSKAALWNEVKDKIHQSGNSLSGGQQQRLCIARGVAIKPEVLLLDEPCSALDPISTAKIEELIAELKHEYTVVIVTHNMQQAARCSDYTAYMYLGELMEFGATDQIFVKPARKETEDYITGRFG.

Positions 12 to 253 (IEVKNLNFYY…PARKETEDYI (242 aa)) constitute an ABC transporter domain. 44 to 51 (GPSGCGKS) contacts ATP.

Belongs to the ABC transporter superfamily. Phosphate importer (TC 3.A.1.7) family. The complex is composed of two ATP-binding proteins (PstB), two transmembrane proteins (PstC and PstA) and a solute-binding protein (PstS).

The protein resides in the cell inner membrane. It carries out the reaction phosphate(out) + ATP + H2O = ADP + 2 phosphate(in) + H(+). Functionally, part of the ABC transporter complex PstSACB involved in phosphate import. Responsible for energy coupling to the transport system. In Bordetella avium (strain 197N), this protein is Phosphate import ATP-binding protein PstB.